The primary structure comprises 279 residues: Shikimate dehydrogenase (NADP(+)) (279 aa).

Shikimate contacts are provided by residues 19–21 (SRS) and T66. K70 functions as the Proton acceptor in the catalytic mechanism. Positions 91 and 106 each coordinate shikimate. NADP(+) is bound by residues 129 to 133 (GAGGA), 152 to 157 (NRTLER), and I218. Y220 serves as a coordination point for shikimate. An NADP(+)-binding site is contributed by G241.

It belongs to the shikimate dehydrogenase family. As to quaternary structure, homodimer.

It catalyses the reaction shikimate + NADP(+) = 3-dehydroshikimate + NADPH + H(+). It participates in metabolic intermediate biosynthesis; chorismate biosynthesis; chorismate from D-erythrose 4-phosphate and phosphoenolpyruvate: step 4/7. Involved in the biosynthesis of the chorismate, which leads to the biosynthesis of aromatic amino acids. Catalyzes the reversible NADPH linked reduction of 3-dehydroshikimate (DHSA) to yield shikimate (SA). The chain is Shikimate dehydrogenase (NADP(+)) from Gluconobacter oxydans (strain 621H) (Gluconobacter suboxydans).